Consider the following 279-residue polypeptide: Protease HtpX homolog (279 aa).

Transmembrane regions (helical) follow at residues 4-24 (IFLFLATNIAVLVVINIVLAV) and 34-54 (GSLLAYSAVVGFTGSIISLLM). Residue H140 coordinates Zn(2+). E141 is an active-site residue. H144 is a Zn(2+) binding site. 2 helical membrane passes run 155-175 (LIQGVVNTFVVFLSRIIANLI) and 189-209 (FLVSMVFQILFGFLASLIVMW). E215 contributes to the Zn(2+) binding site.

This sequence belongs to the peptidase M48B family. The cofactor is Zn(2+).

The protein resides in the cell inner membrane. The chain is Protease HtpX homolog from Neisseria meningitidis serogroup B (strain ATCC BAA-335 / MC58).